The chain runs to 353 residues: Outer membrane protein A (353 aa).

A signal peptide spans 1-21; the sequence is MKKTAIALAVALVGFATVAQA. The next 8 membrane-spanning stretches (beta stranded) occupy residues 27–37, 56–67, 71–79, 97–108, 113–121, 148–157, 162–169, and 188–196; these read TWYTGGKLGWS, QLGAGAFFGYQA, LGFEMGYDW, QGVQLAAKLSYP, LDVYTRLGG, PLVALGAEYA, WATRMEYQ, and LLSVGVSYR. 4 tandem repeats follow at residues 208-209, 210-211, 212-213, and 214-215. Residues 208 to 215 are 4 X 2 AA approximate tandem repeats of A-P; the sequence is APTPAPAP. The OmpA-like domain occupies 217-345; that stretch reads VDTKRFTLKS…RVEIEVKGYK (129 aa). Cysteines 318 and 330 form a disulfide.

It belongs to the outer membrane OOP (TC 1.B.6) superfamily. OmpA family. In terms of assembly, monomer and homodimer.

It is found in the cell outer membrane. Its function is as follows. With TolR probably plays a role in maintaining the position of the peptidoglycan cell wall in the periplasm. Acts as a porin with low permeability that allows slow penetration of small solutes; an internal gate slows down solute passage. The protein is Outer membrane protein A of Yersinia pseudotuberculosis serotype I (strain IP32953).